The sequence spans 383 residues: Mannitol-1-phosphate 5-dehydrogenase (383 aa).

Residue 3–14 participates in NAD(+) binding; that stretch reads ALHFGAGNIGRG.

It belongs to the mannitol dehydrogenase family.

The catalysed reaction is D-mannitol 1-phosphate + NAD(+) = beta-D-fructose 6-phosphate + NADH + H(+). This is Mannitol-1-phosphate 5-dehydrogenase from Serratia proteamaculans (strain 568).